A 760-amino-acid polypeptide reads, in one-letter code: Polyribonucleotide nucleotidyltransferase (760 aa).

Mg(2+)-binding residues include Asp-492 and Asp-498. The 60-residue stretch at 559–618 folds into the KH domain; the sequence is PQHAEVFVNPDIIRIIIGPGGKNIKAITATTGASIDIEDSGRVSIFAPTLEAMEMAREMV. The S1 motif domain maps to 628 to 702; that stretch reads GKNYTGKVRK…SRKAVLLEEQ (75 aa). The tract at residues 706–760 is disordered; that stretch reads WKPEDTARPSGPREGGRRDGGRDGRRDGGRDGRRDGGRDGGRRDGGRRDGGRDRN. Residues 719 to 760 are compositionally biased toward basic and acidic residues; sequence EGGRRDGGRDGRRDGGRDGRRDGGRDGGRRDGGRRDGGRDRN.

Belongs to the polyribonucleotide nucleotidyltransferase family. It depends on Mg(2+) as a cofactor.

The protein localises to the cytoplasm. It catalyses the reaction RNA(n+1) + phosphate = RNA(n) + a ribonucleoside 5'-diphosphate. Functionally, involved in mRNA degradation. Catalyzes the phosphorolysis of single-stranded polyribonucleotides processively in the 3'- to 5'-direction. The polypeptide is Polyribonucleotide nucleotidyltransferase (Nitratidesulfovibrio vulgaris (strain ATCC 29579 / DSM 644 / CCUG 34227 / NCIMB 8303 / VKM B-1760 / Hildenborough) (Desulfovibrio vulgaris)).